Consider the following 72-residue polypeptide: Translation initiation factor IF-1 (72 aa).

Residues 1 to 72 form the S1-like domain; it reads MAKDDVIEVE…TRGRITYRYK (72 aa). A Phosphotyrosine modification is found at Tyr-60.

It belongs to the IF-1 family. In terms of assembly, component of the 30S ribosomal translation pre-initiation complex which assembles on the 30S ribosome in the order IF-2 and IF-3, IF-1 and N-formylmethionyl-tRNA(fMet); mRNA recruitment can occur at any time during PIC assembly.

The protein resides in the cytoplasm. In terms of biological role, one of the essential components for the initiation of protein synthesis. Stabilizes the binding of IF-2 and IF-3 on the 30S subunit to which N-formylmethionyl-tRNA(fMet) subsequently binds. Helps modulate mRNA selection, yielding the 30S pre-initiation complex (PIC). Upon addition of the 50S ribosomal subunit IF-1, IF-2 and IF-3 are released leaving the mature 70S translation initiation complex. The protein is Translation initiation factor IF-1 of Bacillus licheniformis (strain ATCC 14580 / DSM 13 / JCM 2505 / CCUG 7422 / NBRC 12200 / NCIMB 9375 / NCTC 10341 / NRRL NRS-1264 / Gibson 46).